The following is a 425-amino-acid chain: Serine--tRNA ligase (425 aa).

233-235 (TAE) serves as a coordination point for L-serine. 264–266 (RRE) lines the ATP pocket. Glutamate 287 lines the L-serine pocket. ATP is bound at residue 351-354 (EISS). Residue serine 387 coordinates L-serine.

This sequence belongs to the class-II aminoacyl-tRNA synthetase family. Type-1 seryl-tRNA synthetase subfamily. Homodimer. The tRNA molecule binds across the dimer.

It localises to the cytoplasm. It carries out the reaction tRNA(Ser) + L-serine + ATP = L-seryl-tRNA(Ser) + AMP + diphosphate + H(+). The enzyme catalyses tRNA(Sec) + L-serine + ATP = L-seryl-tRNA(Sec) + AMP + diphosphate + H(+). Its pathway is aminoacyl-tRNA biosynthesis; selenocysteinyl-tRNA(Sec) biosynthesis; L-seryl-tRNA(Sec) from L-serine and tRNA(Sec): step 1/1. In terms of biological role, catalyzes the attachment of serine to tRNA(Ser). Is also able to aminoacylate tRNA(Sec) with serine, to form the misacylated tRNA L-seryl-tRNA(Sec), which will be further converted into selenocysteinyl-tRNA(Sec). In Thermotoga petrophila (strain ATCC BAA-488 / DSM 13995 / JCM 10881 / RKU-1), this protein is Serine--tRNA ligase.